Reading from the N-terminus, the 249-residue chain is Small ribosomal subunit protein uS4m (249 aa).

The region spanning arginine 133–glutamine 193 is the S4 RNA-binding domain.

It belongs to the universal ribosomal protein uS4 family.

Its subcellular location is the mitochondrion. The protein is Small ribosomal subunit protein uS4m (RPS4) of Reclinomonas americana.